The sequence spans 286 residues: Formamidopyrimidine-DNA glycosylase (286 aa).

Pro2 serves as the catalytic Schiff-base intermediate with DNA. Glu3 serves as the catalytic Proton donor. Lys60 functions as the Proton donor; for beta-elimination activity in the catalytic mechanism. Residues His103, Arg122, and Arg167 each contribute to the DNA site. The FPG-type zinc-finger motif lies at 252 to 286; that stretch reads WVYRRNQKPCRKCGTLIEKTKVAGRSTHWCPNCQN. Catalysis depends on Arg276, which acts as the Proton donor; for delta-elimination activity.

Belongs to the FPG family. As to quaternary structure, monomer. Zn(2+) is required as a cofactor.

The catalysed reaction is Hydrolysis of DNA containing ring-opened 7-methylguanine residues, releasing 2,6-diamino-4-hydroxy-5-(N-methyl)formamidopyrimidine.. The enzyme catalyses 2'-deoxyribonucleotide-(2'-deoxyribose 5'-phosphate)-2'-deoxyribonucleotide-DNA = a 3'-end 2'-deoxyribonucleotide-(2,3-dehydro-2,3-deoxyribose 5'-phosphate)-DNA + a 5'-end 5'-phospho-2'-deoxyribonucleoside-DNA + H(+). Involved in base excision repair of DNA damaged by oxidation or by mutagenic agents. Acts as a DNA glycosylase that recognizes and removes damaged bases. Has a preference for oxidized purines, such as 7,8-dihydro-8-oxoguanine (8-oxoG). Has AP (apurinic/apyrimidinic) lyase activity and introduces nicks in the DNA strand. Cleaves the DNA backbone by beta-delta elimination to generate a single-strand break at the site of the removed base with both 3'- and 5'-phosphates. This Prochlorococcus marinus (strain MIT 9211) protein is Formamidopyrimidine-DNA glycosylase.